The primary structure comprises 195 residues: Peptidyl-tRNA hydrolase (195 aa).

Tyrosine 17 lines the tRNA pocket. The active-site Proton acceptor is histidine 22. TRNA-binding residues include phenylalanine 68, asparagine 70, and asparagine 116.

It belongs to the PTH family. In terms of assembly, monomer.

The protein resides in the cytoplasm. The enzyme catalyses an N-acyl-L-alpha-aminoacyl-tRNA + H2O = an N-acyl-L-amino acid + a tRNA + H(+). Hydrolyzes ribosome-free peptidyl-tRNAs (with 1 or more amino acids incorporated), which drop off the ribosome during protein synthesis, or as a result of ribosome stalling. Functionally, catalyzes the release of premature peptidyl moieties from peptidyl-tRNA molecules trapped in stalled 50S ribosomal subunits, and thus maintains levels of free tRNAs and 50S ribosomes. In Pectobacterium carotovorum subsp. carotovorum (strain PC1), this protein is Peptidyl-tRNA hydrolase.